The chain runs to 58 residues: UPF0339 protein TDE_0826 (58 aa).

This sequence belongs to the UPF0339 family.

The protein is UPF0339 protein TDE_0826 of Treponema denticola (strain ATCC 35405 / DSM 14222 / CIP 103919 / JCM 8153 / KCTC 15104).